Consider the following 140-residue polypeptide: Large ribosomal subunit protein uL16 (140 aa).

Belongs to the universal ribosomal protein uL16 family. As to quaternary structure, part of the 50S ribosomal subunit.

In terms of biological role, binds 23S rRNA and is also seen to make contacts with the A and possibly P site tRNAs. In Amoebophilus asiaticus (strain 5a2), this protein is Large ribosomal subunit protein uL16.